Consider the following 710-residue polypeptide: Zinc finger and BTB domain-containing protein 24 (710 aa).

In terms of domain architecture, BTB spans 37-103; the sequence is CDITLIVENV…IYTGYLHASE (67 aa). Disordered stretches follow at residues 134 to 176 and 202 to 256; these read APKP…EGRS and EEDS…SRRR. Positions 159–171 form a DNA-binding region, a.T hook; sequence KRKRGRPRKANGL. 2 stretches are compositionally biased toward basic and acidic residues: residues 202–219 and 231–244; these read EEDSVKLSEQTPEDKESE and PAEKDENFDPKAGD. 8 consecutive C2H2-type zinc fingers follow at residues 293–315, 321–343, 349–371, 377–399, 405–427, 433–455, 461–483, and 489–511; these read ARCKDCDRVFKYSHFLAIHQRRH, FKCNECGKGFAQKHSLQVHTRMH, YTCTVCGKALTTKHSLLEHMSLH, FTCDQCGKYFSQKRQLKSHYRVH, PECSHCHRKFMDVSQLKKHLRTH, FTCEICGKSFTAKSSLQTHIRIH, YSCSICGKCFSDSSAKRRHCILH, and FSCPECGLQFARLDNLKAHLKIH. Residues 651 to 676 are disordered; the sequence is EQTTSSVPAADTGARATPVPSTRPGA.

It belongs to the krueppel C2H2-type zinc-finger protein family. As to quaternary structure, interacts with MN1. In terms of tissue distribution, widely expressed. Highest level in liver, testis and kidney.

It is found in the nucleus. May be involved in BMP2-induced transcription. In Mus musculus (Mouse), this protein is Zinc finger and BTB domain-containing protein 24 (Zbtb24).